The sequence spans 446 residues: Chromosomal replication initiator protein DnaA (446 aa).

The segment at 1–81 is domain I, interacts with DnaA modulators; sequence MENIADLWNS…AKLNIRFIIP (81 aa). The interval 81 to 109 is domain II; sequence PQSQTEEEVDYPPAKAKKMNDESNHLPQS. Positions 110–326 are domain III, AAA+ region; it reads MLNPKYTFDT…GALIRVVAYS (217 aa). The ATP site is built by Gly154, Gly156, Lys157, and Thr158. The interval 327–446 is domain IV, binds dsDNA; it reads SLINKDINAD…QIEEINDILK (120 aa).

The protein belongs to the DnaA family. Oligomerizes as a right-handed, spiral filament on DNA at oriC.

Its subcellular location is the cytoplasm. Functionally, plays an essential role in the initiation and regulation of chromosomal replication. ATP-DnaA binds to the origin of replication (oriC) to initiate formation of the DNA replication initiation complex once per cell cycle. Binds the DnaA box (a 9 base pair repeat at the origin) and separates the double-stranded (ds)DNA. Forms a right-handed helical filament on oriC DNA; dsDNA binds to the exterior of the filament while single-stranded (ss)DNA is stabiized in the filament's interior. The ATP-DnaA-oriC complex binds and stabilizes one strand of the AT-rich DNA unwinding element (DUE), permitting loading of DNA polymerase. After initiation quickly degrades to an ADP-DnaA complex that is not apt for DNA replication. Binds acidic phospholipids. The protein is Chromosomal replication initiator protein DnaA of Bacillus cytotoxicus (strain DSM 22905 / CIP 110041 / 391-98 / NVH 391-98).